The chain runs to 176 residues: PRELI domain-containing protein 2 (176 aa).

The region spanning 1-175 (MGIAVEARKV…ILRERCGCPF (175 aa)) is the PRELI/MSF1 domain.

The chain is PRELI domain-containing protein 2 (prelid2) from Xenopus tropicalis (Western clawed frog).